Reading from the N-terminus, the 77-residue chain is UPF0291 protein EAT1b_0405 (77 aa).

The segment at 53-77 is disordered; it reads KVVDPDGNDVTPEKLKEDQKRYRGE. Residues 63-77 are compositionally biased toward basic and acidic residues; the sequence is TPEKLKEDQKRYRGE.

Belongs to the UPF0291 family.

It localises to the cytoplasm. This is UPF0291 protein EAT1b_0405 from Exiguobacterium sp. (strain ATCC BAA-1283 / AT1b).